A 450-amino-acid polypeptide reads, in one-letter code: MTVHSAESNGSNRIVIIIVGLGIAGLSAAIECHGKGHQVMVFEKYSDLKRTEGDGISIGSNGARVSAKWGDGTFHELIRPLEYQTNKAKVSDYTGYSYGTFELHGYNEGRGYTVNRGQLVYAMHEYARSLGIPIFLNSEVTGYWETEDEAGVVVDGKRISADCVVCAEGIHSSGRLIITGQKMELKETGYAASRGYLDACVTSQDSKLNWILGEEEAEAEDCVYGWLGPGVHFGITTKKRENELFWYCSHKDACTPSKDIDGTINQILHCMEGWAARDQLETVMRKAKKGRFVSETLAIRTPLATWLSPKRRMIVIGDAAHAALPSSGQGGTQAIEDAATLAICLELAGKKDVALALSVTEKLRHQRAQIVQQGGLAVLQFVMNHVDFEALRTDPTMVKPPHPAWILDHDCQEYAYREFVKAAEAIQDGEEYVPHNIPRDGKYSMEYNSQ.

A helical membrane pass occupies residues 14–34 (IVIIIVGLGIAGLSAAIECHG). FAD-binding residues include E43 and R116. R194 is an active-site residue. FAD contacts are provided by D318 and G331.

Belongs to the paxM FAD-dependent monooxygenase family.

It is found in the membrane. The catalysed reaction is cyclo(N(8)-(alpha,alpha-dimethylallyl)-L-Trp-6a-(alpha,alpha-dimethylallyl)-L-Trp) + AH2 + O2 = okaramine C + A + H2O. The protein operates within alkaloid biosynthesis. FAD-dependent monooxygenase; part of the gene cluster that mediates the biosynthesis of okaramine B, a prenylated indole alkaloid that possesses an unusual octacyclic ring system, including a four-membered azetidine ring and an eight-membered azocine ring, and that exhibits insecticidal activity against silkworm larvae. Within the pathway, okaC performs indole 2,3-epoxidation, facilitating the formation of the hexahydropyrrolo[2,3-b]indole (HPI) moiety of okaramine C. okaC then performs asymmetric reverse prenylation of cyclo(L-Trp-L-Trp) at N-1 and C-2' of the indole ring to produce the cyclic prenylated tryptophan dimer cyclo(N8-(alpha,alpha-dimethylallyl)-L-Trp-6a-(alpha,alpha-dime-thylallyl)-L-Trp). The biosynthesis begins with the NRPS okaA that condenses two tryptophan molecules into cyclo(L-Trp-L-Trp). Prenylation by the prenyltransferase okaC then leads to the formation of cyclo(N8-(alpha,alpha-dimethylallyl)-L-Trp-6a-(alpha,alpha-dime-thylallyl)-L-Trp). This is followed by indole 2,3-epoxidation by the FAD-dependent monooxygenase okaB to facilitate the formation of the hexahydropyrrolo[2,3-b]indole (HPI) moiety of okaramine C. The cytochrome P450 monooxygenase okaD then likely catalyzes formation of the eight-membered ring of okaramine A. The dioxygenase okaE further forms the unusual 2-dimethyl-3-methyl-azetidine ring to yield 12-deshydroxyl okaramine E, as well as the hydroxylation of 12-deshydroxyl okaramine E to produce okaramine E. The cytochrome P450 monoxygenase okaG converts 12-deshydroxyl okaramine E into 3-desmethyl okaramine B which is further methylated by the methyltransferase okaF into okaramine B. In a shunt pathway, okaG and okaF together are also able to convert okaramine E into okaramine D. Okaramine H is produced by nonenzymatic conversion from okaramine A. This is FAD-dependent monooxygenase okaB from Penicillium ochrochloron.